A 461-amino-acid polypeptide reads, in one-letter code: L-seryl-tRNA(Sec) selenium transferase (461 aa).

Position 294 is an N6-(pyridoxal phosphate)lysine (K294).

It belongs to the SelA family. Pyridoxal 5'-phosphate is required as a cofactor.

It is found in the cytoplasm. The enzyme catalyses L-seryl-tRNA(Sec) + selenophosphate + H(+) = L-selenocysteinyl-tRNA(Sec) + phosphate. It participates in aminoacyl-tRNA biosynthesis; selenocysteinyl-tRNA(Sec) biosynthesis; selenocysteinyl-tRNA(Sec) from L-seryl-tRNA(Sec) (bacterial route): step 1/1. In terms of biological role, converts seryl-tRNA(Sec) to selenocysteinyl-tRNA(Sec) required for selenoprotein biosynthesis. The polypeptide is L-seryl-tRNA(Sec) selenium transferase (Haemophilus influenzae (strain ATCC 51907 / DSM 11121 / KW20 / Rd)).